Reading from the N-terminus, the 479-residue chain is Deoxyribodipyrimidine photo-lyase (479 aa).

The region spanning 6 to 132 is the Photolyase/cryptochrome alpha/beta domain; that stretch reads APVIVWFRKD…TVRSFSGQLL (127 aa). An FAD-binding site is contributed by Tyr226. Arg230 contributes to the DNA binding site. FAD is bound by residues 238 to 242 and 277 to 284; these read TSLLS and EIVWREFC. Interaction with DNA stretches follow at residues 277 to 284 and 343 to 344; these read EIVWREFC and NR. Position 374–376 (374–376) interacts with FAD; sequence DAD. Position 406 (Gln406) interacts with DNA.

The protein belongs to the DNA photolyase class-3 family. FAD serves as cofactor. The cofactor is (6R)-5,10-methylene-5,6,7,8-tetrahydrofolate.

The catalysed reaction is cyclobutadipyrimidine (in DNA) = 2 pyrimidine residues (in DNA).. Photolyase involved in the repair of UV radiation-induced DNA damage. By using blue-light energy, catalyzes the photoreactivation of cyclobutane pyrimidine dimers (CPDs), which are formed between adjacent bases on the same DNA strand upon exposure to ultraviolet radiation. Can repair CPD lesions in ssDNA as well as in dsDNA. The protein is Deoxyribodipyrimidine photo-lyase of Agrobacterium fabrum (strain C58 / ATCC 33970) (Agrobacterium tumefaciens (strain C58)).